The following is a 387-amino-acid chain: Phosphoglycerate kinase (387 aa).

Substrate-binding positions include 21 to 23 (DLN), Arg36, and 59 to 62 (HLGR). At Lys84 the chain carries N6-acetyllysine. Residues Arg113 and Arg146 each coordinate substrate. Residues Lys197, Glu314, and 340–343 (GGDT) contribute to the ATP site.

Belongs to the phosphoglycerate kinase family. In terms of assembly, monomer.

The protein localises to the cytoplasm. It catalyses the reaction (2R)-3-phosphoglycerate + ATP = (2R)-3-phospho-glyceroyl phosphate + ADP. It participates in carbohydrate degradation; glycolysis; pyruvate from D-glyceraldehyde 3-phosphate: step 2/5. The polypeptide is Phosphoglycerate kinase (Shigella sonnei (strain Ss046)).